The chain runs to 201 residues: Kinetochore protein SPC24 homolog (201 aa).

Positions 78-133 (DIAAEDEIERLQKELDEEMEREFKLKDELRLVADELKDLNAQLSSIDEHKQSTKRK) form a coiled coil.

It belongs to the SPC24 family. Component of the NDC80 complex, which consists of NDC80, NUF2, SPC24 and SPC25. Highly expressed in actively dividing tissues, such as shoot apical meristem (SAM), root apical meristem (RAM), vasculature, newly emerging leaves and inflorescence shoots.

It is found in the chromosome. The protein localises to the centromere. Acts as a component of the essential kinetochore-associated NDC80 complex, which is required for chromosome segregation and spindle checkpoint activity to ensure proper cell division. Required for the maintenance of plant architecture. The protein is Kinetochore protein SPC24 homolog of Arabidopsis thaliana (Mouse-ear cress).